We begin with the raw amino-acid sequence, 283 residues long: Shikimate dehydrogenase (NADP(+)) (283 aa).

Shikimate is bound by residues 16-18 and T63; that span reads SLS. K67 (proton acceptor) is an active-site residue. D79 serves as a coordination point for NADP(+). 2 residues coordinate shikimate: N88 and D103. NADP(+)-binding positions include 128-132, A223, and G243; that span reads GAGGA.

Belongs to the shikimate dehydrogenase family. In terms of assembly, homodimer.

The enzyme catalyses shikimate + NADP(+) = 3-dehydroshikimate + NADPH + H(+). It functions in the pathway metabolic intermediate biosynthesis; chorismate biosynthesis; chorismate from D-erythrose 4-phosphate and phosphoenolpyruvate: step 4/7. Functionally, involved in the biosynthesis of the chorismate, which leads to the biosynthesis of aromatic amino acids. Catalyzes the reversible NADPH linked reduction of 3-dehydroshikimate (DHSA) to yield shikimate (SA). The chain is Shikimate dehydrogenase (NADP(+)) from Xanthomonas oryzae pv. oryzae (strain MAFF 311018).